Consider the following 298-residue polypeptide: Acetylglutamate kinase (298 aa).

Substrate contacts are provided by residues 69–70 (GG), Arg91, and Asn196.

This sequence belongs to the acetylglutamate kinase family. ArgB subfamily.

Its subcellular location is the cytoplasm. It catalyses the reaction N-acetyl-L-glutamate + ATP = N-acetyl-L-glutamyl 5-phosphate + ADP. Its pathway is amino-acid biosynthesis; L-arginine biosynthesis; N(2)-acetyl-L-ornithine from L-glutamate: step 2/4. In terms of biological role, catalyzes the ATP-dependent phosphorylation of N-acetyl-L-glutamate. This chain is Acetylglutamate kinase, found in Bradyrhizobium sp. (strain BTAi1 / ATCC BAA-1182).